Reading from the N-terminus, the 580-residue chain is Trafficking protein particle complex subunit 14 (580 aa).

Disordered stretches follow at residues 95 to 134 (GSAG…TSGG) and 480 to 533 (VSHP…RSGS). The span at 105–116 (PGGGDPGGGGLF) shows a compositional bias: gly residues. S491 bears the Phosphoserine mark. Residues 492 to 502 (RKSSPSSPAVR) are compositionally biased toward low complexity. Over residues 512–525 (LGRSQSFSHQQPSR) the composition is skewed to polar residues. S517 is subject to Phosphoserine. Residue T541 is modified to Phosphothreonine. At S546 the chain carries Phosphoserine.

Component of the multisubunit TRAPP II complex, which includes at least TRAPPC1, TRAPPC2, TRAPPC2L, TRAPPC3, TRAPPC4, TRAPPC5, TRAPPC6A/B, TRAPPC9, TRAPPC10 and TRAPPC14. TRAPPC9, TRAPPC10 and TRAPPC14 are specific subunits of the TRAPP II complex. Interacts with alpha-tubulin during mitosis. Interacts with RAB3IP (via the N-terminal region); this interaction mediates RAB3IP association with the TRAPP II complex. Interacts with TRAPPC10. Interacts with FBF1.

It is found in the cytoplasm. The protein resides in the cytoskeleton. It localises to the spindle. Its subcellular location is the vesicle. The protein localises to the midbody. Specific subunit of the TRAPP (transport protein particle) II complex, a highly conserved vesicle tethering complex that functions in late Golgi trafficking as a membrane tether. TRAPPC14 is dispensable for TRAPPII complex integrity but mediates RAB3IP preciliary vesicle trafficking to the mother centriole during ciliogenesis. Modulates YAP1 activity as transcriptional regulator. This Mus musculus (Mouse) protein is Trafficking protein particle complex subunit 14.